Consider the following 100-residue polypeptide: Urease subunit gamma (100 aa).

The protein belongs to the urease gamma subunit family. Heterotrimer of UreA (gamma), UreB (beta) and UreC (alpha) subunits. Three heterotrimers associate to form the active enzyme.

It is found in the cytoplasm. The catalysed reaction is urea + 2 H2O + H(+) = hydrogencarbonate + 2 NH4(+). It functions in the pathway nitrogen metabolism; urea degradation; CO(2) and NH(3) from urea (urease route): step 1/1. The polypeptide is Urease subunit gamma (Polaromonas naphthalenivorans (strain CJ2)).